A 108-amino-acid chain; its full sequence is Succinate dehydrogenase assembly factor 4, mitochondrial (108 aa).

The transit peptide at 1-20 (MTPSRLPWLLSWVSATAWRA) directs the protein to the mitochondrion. Residues 31–108 (RKTSSSQGGK…WERKGRCIDF (78 aa)) are disordered. Composition is skewed to basic and acidic residues over residues 52 to 87 (KLPE…EKGG) and 95 to 108 (RYGD…CIDF).

It belongs to the SDHAF4 family. As to quaternary structure, interacts with SDHA in its FAD-bound form.

The protein localises to the mitochondrion matrix. In terms of biological role, plays an essential role in the assembly of succinate dehydrogenase (SDH), an enzyme complex (also referred to as respiratory complex II) that is a component of both the tricarboxylic acid (TCA) cycle and the mitochondrial electron transport chain, and which couples the oxidation of succinate to fumarate with the reduction of ubiquinone (coenzyme Q) to ubiquinol. Binds to the flavoprotein subunit SDHA in its FAD-bound form, blocking the generation of excess reactive oxygen species (ROS) and facilitating its assembly with the iron-sulfur protein subunit SDHB into the SDH catalytic dimer. The polypeptide is Succinate dehydrogenase assembly factor 4, mitochondrial (Homo sapiens (Human)).